The chain runs to 353 residues: Photosystem II protein D1 (353 aa).

The residue at position 2 (T2) is an N-acetylthreonine. T2 is subject to Phosphothreonine. 3 helical membrane passes run 29–46, 118–133, and 142–156; these read YIGW…TATS, HFLL…EWEL, and WIAV…AATA. H118 contributes to the chlorophyll a binding site. Y126 provides a ligand contact to pheophytin a. D170 and E189 together coordinate [CaMn4O5] cluster. The chain crosses the membrane as a helical span at residues 197-218; the sequence is FHMLGVAGVFGGSLFSAMHGSL. H198 contacts chlorophyll a. Residues H215 and 264–265 contribute to the a quinone site; that span reads SF. H215 provides a ligand contact to Fe cation. H272 contributes to the Fe cation binding site. Residues 274 to 288 traverse the membrane as a helical segment; the sequence is FLAAWPVVGIWFTAL. The [CaMn4O5] cluster site is built by H332, E333, D342, and A344. A propeptide spanning residues 345–353 is cleaved from the precursor; it reads AMEAPSVNG.

It belongs to the reaction center PufL/M/PsbA/D family. PSII is composed of 1 copy each of membrane proteins PsbA, PsbB, PsbC, PsbD, PsbE, PsbF, PsbH, PsbI, PsbJ, PsbK, PsbL, PsbM, PsbT, PsbX, PsbY, PsbZ, Psb30/Ycf12, at least 3 peripheral proteins of the oxygen-evolving complex and a large number of cofactors. It forms dimeric complexes. The D1/D2 heterodimer binds P680, chlorophylls that are the primary electron donor of PSII, and subsequent electron acceptors. It shares a non-heme iron and each subunit binds pheophytin, quinone, additional chlorophylls, carotenoids and lipids. D1 provides most of the ligands for the Mn4-Ca-O5 cluster of the oxygen-evolving complex (OEC). There is also a Cl(-1) ion associated with D1 and D2, which is required for oxygen evolution. The PSII complex binds additional chlorophylls, carotenoids and specific lipids. serves as cofactor. Post-translationally, tyr-161 forms a radical intermediate that is referred to as redox-active TyrZ, YZ or Y-Z. In terms of processing, C-terminally processed by CTPA; processing is essential to allow assembly of the oxygen-evolving complex and thus photosynthetic growth.

The protein resides in the plastid. It is found in the chloroplast thylakoid membrane. It catalyses the reaction 2 a plastoquinone + 4 hnu + 2 H2O = 2 a plastoquinol + O2. Photosystem II (PSII) is a light-driven water:plastoquinone oxidoreductase that uses light energy to abstract electrons from H(2)O, generating O(2) and a proton gradient subsequently used for ATP formation. It consists of a core antenna complex that captures photons, and an electron transfer chain that converts photonic excitation into a charge separation. The D1/D2 (PsbA/PsbD) reaction center heterodimer binds P680, the primary electron donor of PSII as well as several subsequent electron acceptors. This chain is Photosystem II protein D1, found in Phaseolus vulgaris (Kidney bean).